The following is a 140-amino-acid chain: MALERTFSIIKPDATRRNLTGKINAKFEEAGLRIVAQKRIHMTKAQAGVFYAVHAERPFYDELCEFMASAPVVVQVLEGEGAIAKNREVMGATNPADAAPGTIRAEFAESVGENSVHGSDAPETAAEEIAYFFSGMELVG.

ATP-binding residues include Lys11, Phe59, Arg87, Thr93, Arg104, and Asn114. Catalysis depends on His117, which acts as the Pros-phosphohistidine intermediate.

The protein belongs to the NDK family. As to quaternary structure, homotetramer. Mg(2+) serves as cofactor.

Its subcellular location is the cytoplasm. The enzyme catalyses a 2'-deoxyribonucleoside 5'-diphosphate + ATP = a 2'-deoxyribonucleoside 5'-triphosphate + ADP. It catalyses the reaction a ribonucleoside 5'-diphosphate + ATP = a ribonucleoside 5'-triphosphate + ADP. In terms of biological role, major role in the synthesis of nucleoside triphosphates other than ATP. The ATP gamma phosphate is transferred to the NDP beta phosphate via a ping-pong mechanism, using a phosphorylated active-site intermediate. The protein is Nucleoside diphosphate kinase of Roseobacter denitrificans (strain ATCC 33942 / OCh 114) (Erythrobacter sp. (strain OCh 114)).